Here is a 209-residue protein sequence, read N- to C-terminus: Probable GTP-binding protein EngB (209 aa).

The EngB-type G domain occupies 22–198 (TPLEIAFVGR…NRTVGSWFDA (177 aa)). Mg(2+)-binding residues include Ser-37 and Thr-59.

It belongs to the TRAFAC class TrmE-Era-EngA-EngB-Septin-like GTPase superfamily. EngB GTPase family. Requires Mg(2+) as cofactor.

In terms of biological role, necessary for normal cell division and for the maintenance of normal septation. In Neisseria meningitidis serogroup C (strain 053442), this protein is Probable GTP-binding protein EngB.